A 348-amino-acid polypeptide reads, in one-letter code: 4-hydroxy-3-methylbut-2-enyl diphosphate reductase (348 aa).

Residue Cys-21 coordinates [4Fe-4S] cluster. Positions 50 and 86 each coordinate (2E)-4-hydroxy-3-methylbut-2-enyl diphosphate. His-50 and His-86 together coordinate dimethylallyl diphosphate. His-50 and His-86 together coordinate isopentenyl diphosphate. Cys-108 contributes to the [4Fe-4S] cluster binding site. His-136 provides a ligand contact to (2E)-4-hydroxy-3-methylbut-2-enyl diphosphate. A dimethylallyl diphosphate-binding site is contributed by His-136. His-136 is a binding site for isopentenyl diphosphate. Residue Glu-138 is the Proton donor of the active site. Thr-177 lines the (2E)-4-hydroxy-3-methylbut-2-enyl diphosphate pocket. [4Fe-4S] cluster is bound at residue Cys-207. (2E)-4-hydroxy-3-methylbut-2-enyl diphosphate-binding residues include Ser-235, Ser-236, Asn-237, and Ser-280. Ser-235, Ser-236, Asn-237, and Ser-280 together coordinate dimethylallyl diphosphate. Isopentenyl diphosphate contacts are provided by Ser-235, Ser-236, Asn-237, and Ser-280.

The protein belongs to the IspH family. [4Fe-4S] cluster serves as cofactor.

The enzyme catalyses isopentenyl diphosphate + 2 oxidized [2Fe-2S]-[ferredoxin] + H2O = (2E)-4-hydroxy-3-methylbut-2-enyl diphosphate + 2 reduced [2Fe-2S]-[ferredoxin] + 2 H(+). The catalysed reaction is dimethylallyl diphosphate + 2 oxidized [2Fe-2S]-[ferredoxin] + H2O = (2E)-4-hydroxy-3-methylbut-2-enyl diphosphate + 2 reduced [2Fe-2S]-[ferredoxin] + 2 H(+). The protein operates within isoprenoid biosynthesis; dimethylallyl diphosphate biosynthesis; dimethylallyl diphosphate from (2E)-4-hydroxy-3-methylbutenyl diphosphate: step 1/1. It participates in isoprenoid biosynthesis; isopentenyl diphosphate biosynthesis via DXP pathway; isopentenyl diphosphate from 1-deoxy-D-xylulose 5-phosphate: step 6/6. Its function is as follows. Catalyzes the conversion of 1-hydroxy-2-methyl-2-(E)-butenyl 4-diphosphate (HMBPP) into a mixture of isopentenyl diphosphate (IPP) and dimethylallyl diphosphate (DMAPP). Acts in the terminal step of the DOXP/MEP pathway for isoprenoid precursor biosynthesis. In Agrobacterium fabrum (strain C58 / ATCC 33970) (Agrobacterium tumefaciens (strain C58)), this protein is 4-hydroxy-3-methylbut-2-enyl diphosphate reductase.